Here is a 415-residue protein sequence, read N- to C-terminus: Nuclear hormone receptor family member nhr-153 (415 aa).

Positions 26–105 form a DNA-binding region, nuclear receptor; that stretch reads PSVCQICRNP…AGMNPMAIQA (80 aa). 2 consecutive NR C4-type zinc fingers follow at residues 29-49 and 65-88; these read CQIC…CNGC and CFKV…CRAC. In terms of domain architecture, NR LBD spans 170–406; sequence DQRDLSTALS…DPEVLKKKCI (237 aa).

Belongs to the nuclear hormone receptor family.

It is found in the nucleus. In terms of biological role, orphan nuclear receptor. This Caenorhabditis elegans protein is Nuclear hormone receptor family member nhr-153 (nhr-153).